A 390-amino-acid polypeptide reads, in one-letter code: GTPase Obg (390 aa).

Residues 1–159 form the Obg domain; that stretch reads MKFVDEASIL…RELLLELMLL (159 aa). The interval 127 to 147 is disordered; that stretch reads NTRFKSSVNRTPRQKTNGTPG. Residues 129-145 are compositionally biased toward polar residues; that stretch reads RFKSSVNRTPRQKTNGT. An OBG-type G domain is found at 160–333; it reads ADVGMLGMPN…LCWDVMTFII (174 aa). GTP contacts are provided by residues 166-173, 191-195, 213-216, 283-286, and 314-316; these read GMPNAGKS, FTTLV, DIPG, NKID, and SAA. The Mg(2+) site is built by Ser-173 and Thr-193.

It belongs to the TRAFAC class OBG-HflX-like GTPase superfamily. OBG GTPase family. As to quaternary structure, monomer. It depends on Mg(2+) as a cofactor.

It is found in the cytoplasm. An essential GTPase which binds GTP, GDP and possibly (p)ppGpp with moderate affinity, with high nucleotide exchange rates and a fairly low GTP hydrolysis rate. Plays a role in control of the cell cycle, stress response, ribosome biogenesis and in those bacteria that undergo differentiation, in morphogenesis control. The polypeptide is GTPase Obg (Shigella dysenteriae serotype 1 (strain Sd197)).